The following is a 297-amino-acid chain: Small ribosomal subunit protein uS2 (297 aa).

Positions alanine 263–glutamate 289 are enriched in low complexity. Residues alanine 263–tryptophan 297 form a disordered region.

The protein belongs to the universal ribosomal protein uS2 family. As to quaternary structure, component of the small ribosomal subunit. Mature ribosomes consist of a small (40S) and a large (60S) subunit. The 40S subunit contains about 33 different proteins and 1 molecule of RNA (18S). The 60S subunit contains about 49 different proteins and 3 molecules of RNA (25S, 5.8S and 5S). Interacts with rps21.

Its subcellular location is the cytoplasm. Its function is as follows. Required for the assembly and/or stability of the 40S ribosomal subunit. Required for the processing of the 20S rRNA-precursor to mature 18S rRNA in a late step of the maturation of 40S ribosomal subunits. The chain is Small ribosomal subunit protein uS2 (rps0) from Neosartorya fischeri (strain ATCC 1020 / DSM 3700 / CBS 544.65 / FGSC A1164 / JCM 1740 / NRRL 181 / WB 181) (Aspergillus fischerianus).